We begin with the raw amino-acid sequence, 656 residues long: Ribosome quality control complex subunit 1 (656 aa).

The span at 1–11 (MSSRALRKLQR) shows a compositional bias: basic residues. 3 disordered regions span residues 1–35 (MSSR…FSST), 51–122 (NNAI…LESS), and 634–656 (LFTS…GQGD). Residues 17–32 (LLEEALDSESDEDDEF) are compositionally biased toward acidic residues. Residues 51–63 (NNAINSEAEKSVS) show a composition bias toward basic and acidic residues. A phosphoserine mark is found at Ser-56, Ser-61, and Ser-63. The span at 83 to 101 (KKAKNKKKKKKQQKKKKVT) shows a compositional bias: basic residues. The span at 102–122 (GKRDLDNQSSDNEKLEGLESS) shows a compositional bias: basic and acidic residues. Residues Ser-110 and Ser-111 each carry the phosphoserine modification.

This sequence belongs to the TCF25 family. In terms of assembly, component of the ribosome quality control complex (RQC), composed of the E3 ubiquitin ligase rkr1/ltn1, rqc1 and mtr1/rqc2, as well as cdc48 and its ubiquitin-binding cofactors. RQC forms a stable complex with 60S ribosomal subunits.

The protein localises to the cytoplasm. Functionally, component of the ribosome quality control complex (RQC), a ribosome-associated complex that mediates ubiquitination and extraction of incompletely synthesized nascent chains for proteasomal degradation. Within the RQC complex, rqc1 is essential for the recruitment of cdc48 to incompletely synthesized nascent polypeptides that are ubiquitinated by rkr1/ltn1. The sequence is that of Ribosome quality control complex subunit 1 from Schizosaccharomyces pombe (strain 972 / ATCC 24843) (Fission yeast).